Consider the following 277-residue polypeptide: MDIVLLIKAAIMGLVEGLTEFLPISSTGHLILAGTLLGFDNEVGKVFDIAIQTGAIFAVILVYWQKIRDTLVALPTEKQAQRFSLNVLIAFVPAVVLGLLFGKAIKAHLFTPVVVASTFIIGGFIILWAERRQEKNPAAVRIHDVESMTPMDALKVGLAQCLAMIPGTSRSGATIIGGMLLGLSRKAATDFSFYLAIPTLIGAGVYSLFKERALLSMADLPTFAVGLVVSFFSAWLCIRWLLRYIASHSFVGFAYYRIVFGVVVLATAWSGAVTWAA.

Transmembrane regions (helical) follow at residues 3–23 (IVLLIKAAIMGLVEGLTEFLP), 43–63 (VGKVFDIAIQTGAIFAVILVY), 85–105 (LNVLIAFVPAVVLGLLFGKAI), 109–129 (LFTPVVVASTFIIGGFIILWA), 189–209 (TDFSFYLAIPTLIGAGVYSLF), 218–238 (ADLPTFAVGLVVSFFSAWLCI), and 249–269 (SFVGFAYYRIVFGVVVLATAW).

It belongs to the UppP family.

The protein resides in the cell inner membrane. The catalysed reaction is di-trans,octa-cis-undecaprenyl diphosphate + H2O = di-trans,octa-cis-undecaprenyl phosphate + phosphate + H(+). In terms of biological role, catalyzes the dephosphorylation of undecaprenyl diphosphate (UPP). Confers resistance to bacitracin. The protein is Undecaprenyl-diphosphatase of Albidiferax ferrireducens (strain ATCC BAA-621 / DSM 15236 / T118) (Rhodoferax ferrireducens).